Reading from the N-terminus, the 428-residue chain is Glutamate-1-semialdehyde 2,1-aminomutase 1 (428 aa).

K268 carries the post-translational modification N6-(pyridoxal phosphate)lysine.

Belongs to the class-III pyridoxal-phosphate-dependent aminotransferase family. HemL subfamily. As to quaternary structure, homodimer. It depends on pyridoxal 5'-phosphate as a cofactor.

Its subcellular location is the cytoplasm. The enzyme catalyses (S)-4-amino-5-oxopentanoate = 5-aminolevulinate. It participates in porphyrin-containing compound metabolism; protoporphyrin-IX biosynthesis; 5-aminolevulinate from L-glutamyl-tRNA(Glu): step 2/2. In Bacillus cereus (strain G9842), this protein is Glutamate-1-semialdehyde 2,1-aminomutase 1.